Reading from the N-terminus, the 255-residue chain is Probable transcriptional regulatory protein PCC7424_2775 (255 aa).

It belongs to the TACO1 family.

It localises to the cytoplasm. This Gloeothece citriformis (strain PCC 7424) (Cyanothece sp. (strain PCC 7424)) protein is Probable transcriptional regulatory protein PCC7424_2775.